The chain runs to 244 residues: Large ribosomal subunit protein uL2 (244 aa).

Basic residues-rich tracts occupy residues 1–12 (MGKRPLVRRRGR) and 234–244 (KTGRARIKERK). Disordered stretches follow at residues 1-30 (MGKR…TKAN) and 203-244 (HGGG…KERK).

Belongs to the universal ribosomal protein uL2 family. As to quaternary structure, part of the 50S ribosomal subunit. Forms a bridge to the 30S subunit in the 70S ribosome.

In terms of biological role, one of the primary rRNA binding proteins. Required for association of the 30S and 50S subunits to form the 70S ribosome, for tRNA binding and peptide bond formation. It has been suggested to have peptidyltransferase activity; this is somewhat controversial. Makes several contacts with the 16S rRNA in the 70S ribosome. In Nitrosopumilus maritimus (strain SCM1), this protein is Large ribosomal subunit protein uL2.